The sequence spans 534 residues: Phosphoenolpyruvate carboxykinase (ATP) (534 aa).

3 residues coordinate substrate: Arg-59, Tyr-200, and Lys-206. Residues Lys-206, His-225, and 242-250 each bind ATP; that span reads GLSGTGKTT. Residues Lys-206 and His-225 each coordinate Mn(2+). Asp-263 lines the Mn(2+) pocket. Residues Glu-291, Arg-327, 443 to 444, and Thr-449 each bind ATP; that span reads RI. Position 327 (Arg-327) interacts with substrate.

Belongs to the phosphoenolpyruvate carboxykinase (ATP) family. It depends on Mn(2+) as a cofactor.

The protein resides in the cytoplasm. It carries out the reaction oxaloacetate + ATP = phosphoenolpyruvate + ADP + CO2. Its pathway is carbohydrate biosynthesis; gluconeogenesis. Functionally, involved in the gluconeogenesis. Catalyzes the conversion of oxaloacetate (OAA) to phosphoenolpyruvate (PEP) through direct phosphoryl transfer between the nucleoside triphosphate and OAA. The protein is Phosphoenolpyruvate carboxykinase (ATP) of Agathobacter rectalis (strain ATCC 33656 / DSM 3377 / JCM 17463 / KCTC 5835 / VPI 0990) (Eubacterium rectale).